A 261-amino-acid polypeptide reads, in one-letter code: Cytochrome c oxidase subunit 3 (261 aa).

Topologically, residues 1-15 (MVHQSHAYHMLKPSP) are mitochondrial matrix. The helical transmembrane segment at 16–34 (WPLTGALSALLMTSGLAMW) threads the bilayer. Residues 35–40 (FHFHST) lie on the Mitochondrial intermembrane side of the membrane. Residues 41–66 (TLLLTGMLTNALTMYQWWRDVVREST) form a helical membrane-spanning segment. The Mitochondrial matrix portion of the chain corresponds to 67-72 (YQGHHT). The chain crosses the membrane as a helical span at residues 73–105 (LPVQKGLRYGMILFITSEVFFFAGFFWAFYHSS). The Mitochondrial intermembrane segment spans residues 106–128 (LAPTPQLGGHWPPTGITPLNPLE). Residues 129–152 (VPLLNTAVLLASGVSITWAHHSLM) form a helical membrane-spanning segment. Residues 153–155 (ENN) are Mitochondrial matrix-facing. The helical transmembrane segment at 156–183 (RTQMIQALLITILLGIYFTLLQASEYIE) threads the bilayer. At 184–190 (APFTISD) the chain is on the mitochondrial intermembrane side. Residues 191–223 (GIYGSTFFMTTGFHGLHVIIGSTFLTVCLSCQL) form a helical membrane-spanning segment. Topologically, residues 224-232 (LFHFTSKHH) are mitochondrial matrix. Residues 233–256 (FGFEAAAWYWHFVDVVWLFLYVSI) form a helical membrane-spanning segment. Over 257 to 261 (YWWGS) the chain is Mitochondrial intermembrane.

It belongs to the cytochrome c oxidase subunit 3 family. Component of the cytochrome c oxidase (complex IV, CIV), a multisubunit enzyme composed of 14 subunits. The complex is composed of a catalytic core of 3 subunits MT-CO1, MT-CO2 and MT-CO3, encoded in the mitochondrial DNA, and 11 supernumerary subunits COX4I, COX5A, COX5B, COX6A, COX6B, COX6C, COX7A, COX7B, COX7C, COX8 and NDUFA4, which are encoded in the nuclear genome. The complex exists as a monomer or a dimer and forms supercomplexes (SCs) in the inner mitochondrial membrane with NADH-ubiquinone oxidoreductase (complex I, CI) and ubiquinol-cytochrome c oxidoreductase (cytochrome b-c1 complex, complex III, CIII), resulting in different assemblies (supercomplex SCI(1)III(2)IV(1) and megacomplex MCI(2)III(2)IV(2)).

It is found in the mitochondrion inner membrane. It catalyses the reaction 4 Fe(II)-[cytochrome c] + O2 + 8 H(+)(in) = 4 Fe(III)-[cytochrome c] + 2 H2O + 4 H(+)(out). In terms of biological role, component of the cytochrome c oxidase, the last enzyme in the mitochondrial electron transport chain which drives oxidative phosphorylation. The respiratory chain contains 3 multisubunit complexes succinate dehydrogenase (complex II, CII), ubiquinol-cytochrome c oxidoreductase (cytochrome b-c1 complex, complex III, CIII) and cytochrome c oxidase (complex IV, CIV), that cooperate to transfer electrons derived from NADH and succinate to molecular oxygen, creating an electrochemical gradient over the inner membrane that drives transmembrane transport and the ATP synthase. Cytochrome c oxidase is the component of the respiratory chain that catalyzes the reduction of oxygen to water. Electrons originating from reduced cytochrome c in the intermembrane space (IMS) are transferred via the dinuclear copper A center (CU(A)) of subunit 2 and heme A of subunit 1 to the active site in subunit 1, a binuclear center (BNC) formed by heme A3 and copper B (CU(B)). The BNC reduces molecular oxygen to 2 water molecules using 4 electrons from cytochrome c in the IMS and 4 protons from the mitochondrial matrix. This Pongo pygmaeus (Bornean orangutan) protein is Cytochrome c oxidase subunit 3 (MT-CO3).